The primary structure comprises 324 residues: Probable nicotianamine synthase 4 (324 aa).

Belongs to the nicotianamine synthase (NAS)-like family.

The catalysed reaction is 3 S-adenosyl-L-methionine = nicotianamine + 3 S-methyl-5'-thioadenosine + 3 H(+). In terms of biological role, synthesizes nicotianamine, a polyamine which serves as a sensor for the physiological iron status within the plant, and/or might be involved in the transport of iron. The protein is Probable nicotianamine synthase 4 (NAS4) of Arabidopsis thaliana (Mouse-ear cress).